Consider the following 380-residue polypeptide: Putative S-(hydroxymethyl)glutathione dehydrogenase 2 (380 aa).

Residue Cys-50 participates in Zn(2+) binding. Residue His-51 participates in NAD(+) binding. His-72, Glu-73, Cys-102, Cys-105, Cys-108, Cys-116, and Cys-179 together coordinate Zn(2+). Residues 204-209 (GLGSVG), Asp-228, and 297-299 (IGV) contribute to the NAD(+) site.

The protein belongs to the zinc-containing alcohol dehydrogenase family. Class-III subfamily. The cofactor is Zn(2+).

It carries out the reaction a primary alcohol + NAD(+) = an aldehyde + NADH + H(+). The enzyme catalyses a secondary alcohol + NAD(+) = a ketone + NADH + H(+). It catalyses the reaction S-(hydroxymethyl)glutathione + NADP(+) = S-formylglutathione + NADPH + H(+). The catalysed reaction is S-(hydroxymethyl)glutathione + NAD(+) = S-formylglutathione + NADH + H(+). It carries out the reaction S-nitrosoglutathione + NADH + H(+) = S-(hydroxysulfenamide)glutathione + NAD(+). In terms of biological role, oxidizes long-chain alcohols and, in the presence of glutathione, is able to oxidize formaldehyde. Also acts as a S-nitroso-glutathione reductase by catalyzing the NADH-dependent reduction of S-nitrosoglutathione, thereby regulating protein S-nitrosylation. The sequence is that of Putative S-(hydroxymethyl)glutathione dehydrogenase 2 from Schizosaccharomyces pombe (strain 972 / ATCC 24843) (Fission yeast).